A 312-amino-acid chain; its full sequence is Putative S-adenosyl-L-methionine-dependent methyltransferase Mjls_0078 (312 aa).

Residues aspartate 134 and aspartate 163–leucine 164 each bind S-adenosyl-L-methionine.

It belongs to the UPF0677 family.

Functionally, exhibits S-adenosyl-L-methionine-dependent methyltransferase activity. The polypeptide is Putative S-adenosyl-L-methionine-dependent methyltransferase Mjls_0078 (Mycobacterium sp. (strain JLS)).